Reading from the N-terminus, the 30-residue chain is Hementerin (30 aa).

Requires Ca(2+) as cofactor.

The protein resides in the secreted. Fibrino(geno)lytic activity inhibited by EDTA but not by PMSF, E-64, 6-AHA and aprotinin. Functionally, cleaves fibrinogen Aalpha (FGA), gamma (FGG) and Bbeta (FGB) chains. Degrades cross-linked fibrin. Has no amidolytic, plasminogenolytic or caseinolytic activity. Inhibits platelet aggregation induced by collagen (IC(50)=7.5ug/ml) and various other agonists, presumably via activation of a nitridergic pathway. Inhibition is accompanied by reduced ATP release from and surface expression of SELP and CD63 on platelets as well as increased intracellular levels of Ca(2+), cGMP and nitric oxide synthase activity. The protein is Hementerin of Haementeria depressa (Leech).